We begin with the raw amino-acid sequence, 87 residues long: Cytochrome c oxidase assembly factor 3, mitochondrial (87 aa).

Residues 47-69 (NNLLTAGALGVSVLAIYGYSIFS) traverse the membrane as a helical segment.

This sequence belongs to the COA3 family.

The protein resides in the mitochondrion membrane. Plays a critical role in the biogenesis and activity of cytochrome c oxidase (COX) (complex IV). The sequence is that of Cytochrome c oxidase assembly factor 3, mitochondrial (Ccdc56) from Drosophila melanogaster (Fruit fly).